The primary structure comprises 311 residues: HPr kinase/phosphorylase (311 aa).

Active-site residues include His-136 and Lys-157. 151-158 (GDSGIGKS) contacts ATP. Ser-158 serves as a coordination point for Mg(2+). Asp-175 (proton acceptor; for phosphorylation activity. Proton donor; for dephosphorylation activity) is an active-site residue. Residues 199–208 (LEIRGLGIIN) form an important for the catalytic mechanism of both phosphorylation and dephosphorylation region. Glu-200 serves as a coordination point for Mg(2+). The active site involves Arg-241. The important for the catalytic mechanism of dephosphorylation stretch occupies residues 262 to 267 (PVRPGR).

This sequence belongs to the HPrK/P family. In terms of assembly, homohexamer. Requires Mg(2+) as cofactor.

The enzyme catalyses [HPr protein]-L-serine + ATP = [HPr protein]-O-phospho-L-serine + ADP + H(+). It carries out the reaction [HPr protein]-O-phospho-L-serine + phosphate + H(+) = [HPr protein]-L-serine + diphosphate. In terms of biological role, catalyzes the ATP- as well as the pyrophosphate-dependent phosphorylation of a specific serine residue in HPr, a phosphocarrier protein of the phosphoenolpyruvate-dependent sugar phosphotransferase system (PTS). HprK/P also catalyzes the pyrophosphate-producing, inorganic phosphate-dependent dephosphorylation (phosphorolysis) of seryl-phosphorylated HPr (P-Ser-HPr). The two antagonistic activities of HprK/P are regulated by several intracellular metabolites, which change their concentration in response to the absence or presence of rapidly metabolisable carbon sources (glucose, fructose, etc.) in the growth medium. Therefore, by controlling the phosphorylation state of HPr, HPrK/P is a sensor enzyme that plays a major role in the regulation of carbon metabolism and sugar transport: it mediates carbon catabolite repression (CCR), and regulates PTS-catalyzed carbohydrate uptake and inducer exclusion. In Staphylococcus haemolyticus (strain JCSC1435), this protein is HPr kinase/phosphorylase.